Consider the following 175-residue polypeptide: MDKLADLNYTLSVITSMNDTLHSIIQDPGMAYFLYIASVLTVLFTLHKASIPTMKIALKTSKCSYKVIKYCIVTIINTLLKLAGYKEQVTTKDEIEQQMDRIVKEMRRQLEMIDKLTTREIEQVELLKRIHDNLITRPVDVIDMSKEFNQKNIKTLDEWESGKNPYEPSEVTASM.

At 1–28 the chain is on the lumenal side; that stretch reads MDKLADLNYTLSVITSMNDTLHSIIQDP. N-linked (GlcNAc...) asparagine; by host glycans are attached at residues asparagine 8 and asparagine 18. A helical; Signal-anchor for type III membrane protein transmembrane segment spans residues 29–51; sequence GMAYFLYIASVLTVLFTLHKASI. Topologically, residues 52 to 175 are cytoplasmic; it reads PTMKIALKTS…YEPSEVTASM (124 aa). Ca(2+) contacts are provided by glutamate 120 and glutamine 123.

This sequence belongs to the rotavirus NSP4 family. As to quaternary structure, homotetramer. Interacts with the immature particle in the viroplasm. Interacts with host CAV1, early and late in infection. Interacts with host integrin ITGA1/ITGB1 heterodimer. Interacts with host integrin ITGA2/ITGB1 heterodimer. Interaction with microtubules blocks trafficking to the Golgi apparatus. The N-glycosyl content is primarily Man(9)GlcNAc, with a small amount of Man(8)GlcNAc.

The protein resides in the host rough endoplasmic reticulum membrane. The protein localises to the host membrane. It is found in the host caveola. It localises to the secreted. In terms of biological role, plays an essential role in the virus replication cycle by acting as a viroporin. Creates a pore in the host endoplasmic reticulum and as a consequence releases Ca(2+) in the cytoplasm of infected cell. In turn, high levels of cytoplasmic calcium trigger membrane trafficking and transport of viral ER-associated proteins to viroplasms, sites of viral genome replication and immature particle assembly. The secreted form acts as an enterotoxin that causes phospholipase C-dependent elevation of the intracellular calcium concentration in host intestinal mucosa cells. Increased concentration of intracellular calcium disrupts the cytoskeleton and the tight junctions, raising the paracellular permeability. Potentiates chloride ion secretion through a calcium ion-dependent signaling pathway, inducing age-dependent diarrhea. To perform this enterotoxigenic role in vivo, NSP4 is released from infected enterocytes in a soluble form capable of diffusing within the intestinal lumen and interacting with host plasma membrane receptors on neighboring epithelial cells such as integrins ITGA1/ITGB1 and ITGA2/ITGB1. The chain is Non-structural glycoprotein 4 from Rotavirus A (strain RVA/Human/United States/Wa/1974/G1P1A[8]) (RV-A).